The following is a 209-amino-acid chain: Kynurenine formamidase (209 aa).

Residue W20 coordinates substrate. Residues H50, H54, and D56 each coordinate Zn(2+). The active-site Proton donor/acceptor is H60. Zn(2+) is bound by residues H161 and E173.

It belongs to the Cyclase 1 superfamily. KynB family. Homodimer. The cofactor is Zn(2+).

It catalyses the reaction N-formyl-L-kynurenine + H2O = L-kynurenine + formate + H(+). It participates in amino-acid degradation; L-tryptophan degradation via kynurenine pathway; L-kynurenine from L-tryptophan: step 2/2. Functionally, catalyzes the hydrolysis of N-formyl-L-kynurenine to L-kynurenine, the second step in the kynurenine pathway of tryptophan degradation. The chain is Kynurenine formamidase from Bacillus mycoides (strain KBAB4) (Bacillus weihenstephanensis).